We begin with the raw amino-acid sequence, 975 residues long: Ionotropic receptor 21a (975 aa).

Positions 1-21 (MFKRIVLAVINLVFLIVSTTA) are cleaved as a signal peptide. Asn67, Asn177, and Asn355 each carry an N-linked (GlcNAc...) asparagine glycan. Residues 433–453 (WPVWVAVILIYLLAIFPLAFS) traverse the membrane as a helical segment. N-linked (GlcNAc...) asparagine glycosylation occurs at Asn464. The helical transmembrane segment at 505–525 (IYWVFTIIITACYTGSIIAFI) threads the bilayer. Asn561, Asn586, and Asn611 each carry an N-linked (GlcNAc...) asparagine glycan. The chain crosses the membrane as a helical span at residues 708–728 (MFLLMLFGYVVALGVLISEWV). Disordered stretches follow at residues 757–839 (ATAG…HSLS) and 911–938 (SPHS…RKEM). Polar residues-rich tracts occupy residues 760-777 (GSDN…TNRN) and 788-800 (VENS…NGSA). Residues Asn763 and Asn797 are each glycosylated (N-linked (GlcNAc...) asparagine).

This sequence belongs to the glutamate-gated ion channel (TC 1.A.10.1) family. In terms of tissue distribution, in both female and male antenna, expressed specifically in 3 sensory neurons of flagellomere 13 segment (at protein level).

Its subcellular location is the cell projection. It localises to the cilium membrane. In terms of biological role, integral part of a neural sensory system in the antenna that provides the neural basis for the response to environmental changes in temperature (thermosensation). Specifically, required for thermosensing by the cooling cell. Plays a role in heat seeking and heat-stimulated blood feeding behavior. The chain is Ionotropic receptor 21a from Anopheles gambiae (African malaria mosquito).